The chain runs to 164 residues: MNKVLAIVLTITVAGFAQTAFADDHAMSPDMKLLAGASNWVNQSGSVAQFVFTPSPTQPQTYEVSGNYINNAQGTGCKGTPYPLSGAYYSGNQIISFSVVWSNASANCQSATGWTGYFDFSGSQAVLKTDWNLAFYSGSTPAIQQGQDDFMQSVATVSESLLTE.

The first 22 residues, 1–22 (MNKVLAIVLTITVAGFAQTAFA), serve as a signal peptide directing secretion. Residues 32 to 155 (KLLAGASNWV…GQDDFMQSVA (124 aa)) enclose the Avidin-like domain. Biotin is bound by residues Asn42, Ser46, Tyr68, Asn70, and Gly76. Cys77 and Cys108 are oxidised to a cystine. Ser110, Thr112, and Asp148 together coordinate biotin.

The protein belongs to the avidin/streptavidin family. In terms of assembly, exhibits a dynamic oligomeric assembly: the apo form exits as homooctamers, which dissociate into homodimers upon biotin binding. The X-ray structure of the intact hoefavidin reveals unique crystal packing generated by an octameric cylindrical structure wherein the C-terminal segments of each monomer are introduced into the entrance of the biotin-binding site of an adjacent non-canonical monomer.

The protein localises to the secreted. Functionally, the exact role played by hoefavidin in the host organism is still obscure. Forms a strong non-covalent complex with biotin and 2-iminobiotin. This Hoeflea phototrophica (strain DSM 17068 / NCIMB 14078 / DFL-43) protein is Hoefavidin.